The primary structure comprises 305 residues: Olfactory receptor 9G1 (305 aa).

Topologically, residues 1-24 are extracellular; the sequence is MQRSNHTVTEFILLGFTTDPGMQL. Asparagine 5 carries an N-linked (GlcNAc...) asparagine glycan. The helical transmembrane segment at 25–45 threads the bilayer; sequence GLFVVFLGVYSLTVVGNSTLI. The Cytoplasmic segment spans residues 46 to 53; it reads VLICNDSC. A helical membrane pass occupies residues 54 to 74; it reads LHTPMYFFTGNLSFLDLWYSS. Over 75-98 the chain is Extracellular; the sequence is VYTPKILVTCISEDKSISFAGCLC. Cysteine 96 and cysteine 188 are disulfide-bonded. A helical transmembrane segment spans residues 99–119; the sequence is QFFFSAGLAYSECYLLAAVAY. The Cytoplasmic segment spans residues 120 to 138; the sequence is DRYVAISKPLLYAQAMSIK. A helical membrane pass occupies residues 139 to 159; the sequence is LCALLVAVSYCGGFINSSIIT. Residues 160-196 are Extracellular-facing; that stretch reads KKTFSFNFCRENIIDDFFCDLLPLVELACGEKGGYKI. Residues 197-216 traverse the membrane as a helical segment; the sequence is MMYFLLASNVICPAVLILAS. The Cytoplasmic segment spans residues 217-236; the sequence is YLFIITSVLRISSSKGYLKA. A helical transmembrane segment spans residues 237–257; it reads FSTCSSHLTSVTLYYGSILYI. At 258–270 the chain is on the extracellular side; that stretch reads YALPRSSYSFDMD. Residues 271-291 form a helical membrane-spanning segment; that stretch reads KIVSTFYTVVFPMLNLMIYSL. Topologically, residues 292–305 are cytoplasmic; sequence RNKDVKEALKKLLP.

This sequence belongs to the G-protein coupled receptor 1 family.

The protein localises to the cell membrane. Its function is as follows. Odorant receptor. This is Olfactory receptor 9G1 (OR9G1) from Homo sapiens (Human).